A 527-amino-acid chain; its full sequence is Inosine-5'-monophosphate dehydrogenase (527 aa).

CBS domains lie at 121-183 and 184-240; these read FILD…VTAV and MSTD…PLAS. NAD(+) contacts are provided by residues 277-279 and 327-329; these read DSS and GMG. Gly-329 and Gly-331 together coordinate K(+). Residue Ser-332 participates in IMP binding. K(+) is bound at residue Cys-334. Catalysis depends on Cys-334, which acts as the Thioimidate intermediate. IMP contacts are provided by residues 367–369 and 390–391; these read DGG and GS. Arg-440 functions as the Proton acceptor in the catalytic mechanism. Gln-452 provides a ligand contact to IMP. Residues 506-527 form a disordered region; it reads ASAQTEGNVHGLHSHEKKLYSS. Glu-511 and Gly-512 together coordinate K(+). The span at 518–527 shows a compositional bias: basic and acidic residues; that stretch reads HSHEKKLYSS.

The protein belongs to the IMPDH/GMPR family. In terms of assembly, homotetramer. It depends on K(+) as a cofactor.

It localises to the cytoplasm. The catalysed reaction is IMP + NAD(+) + H2O = XMP + NADH + H(+). The protein operates within purine metabolism; XMP biosynthesis via de novo pathway; XMP from IMP: step 1/1. With respect to regulation, mycophenolic acid (MPA) is a non-competitive inhibitor that prevents formation of the closed enzyme conformation by binding to the same site as the amobile flap. In contrast, mizoribine monophosphate (MZP) is a competitive inhibitor that induces the closed conformation. MPA is a potent inhibitor of mammalian IMPDHs but a poor inhibitor of the bacterial enzymes. MZP is a more potent inhibitor of bacterial IMPDH. In terms of biological role, catalyzes the conversion of inosine 5'-phosphate (IMP) to xanthosine 5'-phosphate (XMP), the first committed and rate-limiting step in the de novo synthesis of guanine nucleotides, and therefore plays an important role in the regulation of cell growth. Part of the gene cluster that mediates the biosynthesis of mycophenolic acid (MPA), the first isolated antibiotic natural product in the world. Does not play a role in the biosynthesis of MPA, but is involved in self resistance to MPA, since MPA acts as an inhibitor of IMP dehydrogenases. In Penicillium brevicompactum, this protein is Inosine-5'-monophosphate dehydrogenase.